Reading from the N-terminus, the 208-residue chain is Protein disulfide-isomerase A3 (208 aa).

The Thioredoxin 1 domain occupies 1–44 (RLAPEYEAAATRYGVSGYPTLKDGEEAGAYDGPRTADGIVSHLK). An N6-succinyllysine modification is found at lysine 44. N6-acetyllysine is present on lysine 49. Position 133 is a phosphothreonine (threonine 133). Residues 151 to 208 (SRFLQDYFDGNLKRYLKSEPIPETNDGPVKMDATANDVPSPYEVKGFPTIYFSPANKK) form the Thioredoxin 2 domain. The residue at position 163 (lysine 163) is an N6-acetyllysine.

The protein belongs to the protein disulfide isomerase family. In terms of assembly, part of the major histocompatibility complex class I (MHC I) peptide loading complex composed of TAP1, TAP2, B2M, MHC heavy chain, TAPBP, PDIA3, and CALR. Interacts with ERP27 and CANX. Interacts with SERPINA2 and SERPINA1. Interacts with ATP2A2. Post-translationally, within the major histocompatibility complex class I (MHC I) peptide loading complex forms reversible disulfide-linked heterodimers with TAPBP as part of its protein folding chaperone activity. This is essential to assist the dynamic assembly of the MHC I complex with high affinity antigens in the endoplasmic reticulum. In terms of processing, phosphorylated. In the caput epididymal spermatozoa, detected in the mid-peice and at low levels in the principal piece. In the cauda epididymal spermatozoa, detected at very low levels in the principal piece and not in the mid-piece (at protein level).

It localises to the endoplasmic reticulum. The protein localises to the endoplasmic reticulum lumen. Its subcellular location is the melanosome. It catalyses the reaction Catalyzes the rearrangement of -S-S- bonds in proteins.. Functionally, protein disulfide isomerase that catalyzes the formation, isomerization, and reduction or oxidation of disulfide bonds in client proteins and functions as a protein folding chaperone. Core component of the major histocompatibility complex class I (MHC I) peptide loading complex where it functions as an essential folding chaperone for TAPBP. Through TAPBP, assists the dynamic assembly of the MHC I complex with high affinity antigens in the endoplasmic reticulum. Therefore, plays a crucial role in the presentation of antigens to cytotoxic T cells in adaptive immunity. This chain is Protein disulfide-isomerase A3, found in Mesocricetus auratus (Golden hamster).